Here is a 314-residue protein sequence, read N- to C-terminus: TPR repeat-containing protein MJ1345 (314 aa).

TPR repeat units lie at residues 12 to 45, 46 to 78, 80 to 112, 114 to 146, 147 to 180, 182 to 214, 215 to 248, 249 to 282, and 284 to 313; these read ESILWDEYFDALEKRNYEKALLLIDKILEVRESP, DVYVRKARILRTLGENDKALEYFDKALKLKPKY, LANFLKGALLVSLGKLEEAKEVFLKLCRLEKSD, PVKYVTAFILKKLGEYDYALKIIDKILKKYPKS, AIAWAEKGEILYREGKLKKSLECFDNALKINPKD, QSLLYKGEILFKLGRYGEALKCLKKVFERNNKD, IRALMYIIQILIYLGRLNQALEYTKKALKLNPDD, PLLYLYKGIILNKLGKYNEAIKYFDKVLEINPNI, and DAWNGKAIALEKLGKINEAIECYNRALDIY.

This is TPR repeat-containing protein MJ1345 from Methanocaldococcus jannaschii (strain ATCC 43067 / DSM 2661 / JAL-1 / JCM 10045 / NBRC 100440) (Methanococcus jannaschii).